The chain runs to 195 residues: Probable GTP-binding protein EngB (195 aa).

Residues 24–195 form the EngB-type G domain; that stretch reads GLTEVALSGR…EIWNFIETYI (172 aa). GTP is bound by residues 32-39, 59-63, 77-80, 144-147, and 176-178; these read GRSNVGKS, GKTQT, DVPG, TKED, and YSS. 2 residues coordinate Mg(2+): Ser39 and Thr61.

This sequence belongs to the TRAFAC class TrmE-Era-EngA-EngB-Septin-like GTPase superfamily. EngB GTPase family. The cofactor is Mg(2+).

Functionally, necessary for normal cell division and for the maintenance of normal septation. This Staphylococcus epidermidis (strain ATCC 35984 / DSM 28319 / BCRC 17069 / CCUG 31568 / BM 3577 / RP62A) protein is Probable GTP-binding protein EngB.